Consider the following 155-residue polypeptide: Riboflavin kinase (155 aa).

Residues G15, K21, T27, and N29 each coordinate ATP. Residues T27 and N29 each coordinate Mg(2+). Residue E79 is the Nucleophile of the active site. Residues I82, H84, and Y91 each coordinate ATP. 3 residues coordinate FMN: R104, K107, and F109.

In terms of assembly, monomer. Directly interacts with TNFRSF1A death domain. TNFRSF1A-binding may be supported by TRADD. In the absence of TNFRSF1A, interacts with TRADD. Independently of TNFRSF1A, interacts with the NADPH oxidase subunit CYBA. Zn(2+) serves as cofactor. Requires Mg(2+) as cofactor. Detected in brain, placenta and urinary bladder.

It localises to the cytoplasm. It catalyses the reaction riboflavin + ATP = FMN + ADP + H(+). It participates in cofactor biosynthesis; FMN biosynthesis; FMN from riboflavin (ATP route): step 1/1. Catalyzes the phosphorylation of riboflavin (vitamin B2) to form flavin-mononucleotide (FMN), hence rate-limiting enzyme in the synthesis of FAD. Essential for TNF-induced reactive oxygen species (ROS) production. Through its interaction with both TNFRSF1A and CYBA, physically and functionally couples TNFRSF1A to NADPH oxidase. TNF-activation of RFK may enhance the incorporation of FAD in NADPH oxidase, a critical step for the assembly and activation of NADPH oxidase. The sequence is that of Riboflavin kinase (RFK) from Homo sapiens (Human).